The chain runs to 331 residues: Lipoyl synthase (331 aa).

Polar residues predominate over residues 1-14 (MSTQLDASQPSNDV). The segment at 1–32 (MSTQLDASQPSNDVASPAAYDPTQKQKSQAKT) is disordered. Cysteine 78, cysteine 83, cysteine 89, cysteine 104, cysteine 108, cysteine 111, and serine 318 together coordinate [4Fe-4S] cluster. The region spanning 89–307 (CFGKGTATFM…EREAYAMGFS (219 aa)) is the Radical SAM core domain.

It belongs to the radical SAM superfamily. Lipoyl synthase family. The cofactor is [4Fe-4S] cluster.

The protein resides in the cytoplasm. The enzyme catalyses [[Fe-S] cluster scaffold protein carrying a second [4Fe-4S](2+) cluster] + N(6)-octanoyl-L-lysyl-[protein] + 2 oxidized [2Fe-2S]-[ferredoxin] + 2 S-adenosyl-L-methionine + 4 H(+) = [[Fe-S] cluster scaffold protein] + N(6)-[(R)-dihydrolipoyl]-L-lysyl-[protein] + 4 Fe(3+) + 2 hydrogen sulfide + 2 5'-deoxyadenosine + 2 L-methionine + 2 reduced [2Fe-2S]-[ferredoxin]. It functions in the pathway protein modification; protein lipoylation via endogenous pathway; protein N(6)-(lipoyl)lysine from octanoyl-[acyl-carrier-protein]: step 2/2. Its function is as follows. Catalyzes the radical-mediated insertion of two sulfur atoms into the C-6 and C-8 positions of the octanoyl moiety bound to the lipoyl domains of lipoate-dependent enzymes, thereby converting the octanoylated domains into lipoylated derivatives. In Bordetella avium (strain 197N), this protein is Lipoyl synthase.